The sequence spans 341 residues: UDP-3-O-acylglucosamine N-acyltransferase (341 aa).

H241 serves as the catalytic Proton acceptor.

This sequence belongs to the transferase hexapeptide repeat family. LpxD subfamily. As to quaternary structure, homotrimer.

The enzyme catalyses a UDP-3-O-[(3R)-3-hydroxyacyl]-alpha-D-glucosamine + a (3R)-hydroxyacyl-[ACP] = a UDP-2-N,3-O-bis[(3R)-3-hydroxyacyl]-alpha-D-glucosamine + holo-[ACP] + H(+). Its pathway is bacterial outer membrane biogenesis; LPS lipid A biosynthesis. Functionally, catalyzes the N-acylation of UDP-3-O-acylglucosamine using 3-hydroxyacyl-ACP as the acyl donor. Is involved in the biosynthesis of lipid A, a phosphorylated glycolipid that anchors the lipopolysaccharide to the outer membrane of the cell. This chain is UDP-3-O-acylglucosamine N-acyltransferase, found in Mannheimia succiniciproducens (strain KCTC 0769BP / MBEL55E).